The chain runs to 157 residues: MSRRNTAKKTKRADKFDPIYQNRLVNMVLNRIIKHGKKSLAYRILYRAMKQIQQKTEKNPLLVLRKAIKEVTPRLIVKSRRKSGSTYQVPFEIKPNRGKILAIRWLLKASRKRLGPNMESKLSYELIDATKGKGKAIRKKEEIHKMAEANRAFADYL.

It belongs to the universal ribosomal protein uS7 family. In terms of assembly, part of the 30S ribosomal subunit.

It is found in the plastid. The protein resides in the chloroplast. Its function is as follows. One of the primary rRNA binding proteins, it binds directly to 16S rRNA where it nucleates assembly of the head domain of the 30S subunit. The sequence is that of Small ribosomal subunit protein uS7cz/uS7cy (rps7-A) from Gnetum parvifolium (Small-leaved jointfir).